The following is a 214-amino-acid chain: Triosephosphate isomerase (214 aa).

6–8 lines the substrate pocket; it reads NLK. Residue His85 is the Electrophile of the active site. The active-site Proton acceptor is the Glu133. Substrate-binding positions include Ile138, Gly173, and 194-195; that span reads AS.

The protein belongs to the triosephosphate isomerase family. Homotetramer; dimer of dimers.

The protein resides in the cytoplasm. The enzyme catalyses D-glyceraldehyde 3-phosphate = dihydroxyacetone phosphate. It functions in the pathway carbohydrate biosynthesis; gluconeogenesis. It participates in carbohydrate degradation; glycolysis; D-glyceraldehyde 3-phosphate from glycerone phosphate: step 1/1. Involved in the gluconeogenesis. Catalyzes stereospecifically the conversion of dihydroxyacetone phosphate (DHAP) to D-glyceraldehyde-3-phosphate (G3P). The sequence is that of Triosephosphate isomerase from Halobacterium salinarum (strain ATCC 700922 / JCM 11081 / NRC-1) (Halobacterium halobium).